A 3020-amino-acid polypeptide reads, in one-letter code: Protein furry homolog (3020 aa).

A Phosphotyrosine modification is found at Y213. Disordered stretches follow at residues 1378–1404, 1529–1554, and 1746–1773; these read GSSP…LKGN, ASGT…ESKI, and SSPV…GNLP. Phosphoserine is present on residues S1382 and S1383. A compositionally biased stretch (low complexity) spans 1752-1772; sequence SGLNSSSTSSSISLGGSSGNL. A phosphoserine mark is found at S1936 and S1940. Residues 1937–1956 are compositionally biased toward low complexity; that stretch reads RSSSPDLSSSSKLTASRKST. 2 disordered regions span residues 1937 to 2042 and 2355 to 2384; these read RSSS…PSHV and LQNS…SNSN. A compositionally biased stretch (gly residues) spans 1966–1976; that stretch reads PGSGGGGGGSG. Positions 2016–2042 are enriched in polar residues; it reads ACTQQGLSSKTRSNSSLKESLTDPSHV. Over residues 2369–2384 the composition is skewed to low complexity; sequence AVTRSASSTSSGSNSN. Phosphoserine is present on residues S2427 and S2428. Residues 2439–2458 form a disordered region; it reads TSLVSSEDGPREQENMDDTN. At S2495 the chain carries Phosphoserine. The disordered stretch occupies residues 2508 to 2535; sequence EERQLSRSTPSLNKMSHEDSDESSEEDL. T2516 carries the post-translational modification Phosphothreonine; by CDK1. Positions 2526–2535 are enriched in acidic residues; that stretch reads DSDESSEEDL. S2815 carries the post-translational modification Phosphoserine.

It belongs to the furry protein family. In terms of assembly, when phosphorylated by CDK1, interacts with PLK1; this interaction occurs in mitotic cells, but not in interphase cells, and leads to further FRY phosphorylation by PLK1. Post-translationally, phosphorylated by AURKA, CDK1 and PLK1.

Its subcellular location is the cytoplasm. It localises to the cytoskeleton. The protein resides in the microtubule organizing center. It is found in the centrosome. The protein localises to the spindle pole. In terms of biological role, plays a crucial role in the structural integrity of mitotic centrosomes and in the maintenance of spindle bipolarity by promoting PLK1 activity at the spindle poles in early mitosis. May function as a scaffold promoting the interaction between AURKA and PLK1, thereby enhancing AURKA-mediated PLK1 phosphorylation. This Mus musculus (Mouse) protein is Protein furry homolog (Fry).